A 391-amino-acid polypeptide reads, in one-letter code: Tumor susceptibility gene 101 protein (391 aa).

N-acetylalanine is present on alanine 2. The region spanning 2–145 (AVSESQLKKM…GEEPPVFSRP (144 aa)) is the UEV domain. Residues 159 to 163 (PPNTS) are interaction with CEP55. The tract at residues 195-222 (GPYPATTSSQYPSQPPVTTAGPSRDGTI) is disordered. The span at 200–215 (TTSSQYPSQPPVTTAG) shows a compositional bias: polar residues. The residue at position 221 (threonine 221) is a Phosphothreonine. The stretch at 238–317 (KLRWRMKEEM…NQSENNDIDE (80 aa)) forms a coiled coil. Residues 321–324 (PTAP) carry the PTAP motif motif. The SB domain maps to 323–391 (APLYKQILNL…RKTAGLSDLY (69 aa)).

Belongs to the ubiquitin-conjugating enzyme family. UEV subfamily. As to quaternary structure, component of the ESCRT-I complex (endosomal sorting complex required for transport I) which consists of TSG101, VPS28, a VPS37 protein (VPS37A to -D) and MVB12A or MVB12B in a 1:1:1:1 stoichiometry. Interacts with VPS37A, VPS37B and VPS37C. Interacts with DMAP1. Interacts with ubiquitin. Interacts with AATF. Interacts with stathmin and GMCL. Component of an ESCRT-I complex (endosomal sorting complex required for transport I) which consists of TSG101, VPS28, VPS37A and UBAP1 in a 1:1:1:1 stoichiometry. Interacts with HGS; the interaction mediates the association with the ESCRT-0 complex. Interacts with GGA1 and GGA3. Interacts (via UEV domain) with PDCD6IP/AIP1. Interacts with VPS28, SNF8 and VPS36. Self-associates. Interacts with MVB12A; the association appears to be mediated by the TSG101-VPS37 binary subcomplex. Interacts with VPS37D. Interacts with LRSAM1. Interacts with CEP55; the interaction is required for cytokinesis. Interacts with PDCD6. Interacts with LITAF. Interacts with MGRN1. Interacts with ARRDC1; recruits TSG101 to the plasma membrane. Post-translationally, monoubiquitinated at multiple sites by LRSAM1 and by MGRN1. Ubiquitination inactivates it, possibly by regulating its shuttling between an active membrane-bound protein and an inactive soluble form. Ubiquitination by MGRN1 requires the presence of UBE2D1.

Its subcellular location is the cytoplasm. The protein localises to the early endosome membrane. The protein resides in the late endosome membrane. It localises to the cytoskeleton. It is found in the microtubule organizing center. Its subcellular location is the centrosome. The protein localises to the midbody. The protein resides in the midbody ring. It localises to the nucleus. Functionally, component of the ESCRT-I complex, a regulator of vesicular trafficking process. Binds to ubiquitinated cargo proteins and is required for the sorting of endocytic ubiquitinated cargos into multivesicular bodies (MVBs). Mediates the association between the ESCRT-0 and ESCRT-I complex. Required for completion of cytokinesis; the function requires CEP55. May be involved in cell growth and differentiation. Acts as a negative growth regulator. Required for the exosomal release of SDCBP, CD63 and syndecan. It may also play a role in the extracellular release of microvesicles that differ from the exosomes. The protein is Tumor susceptibility gene 101 protein (Tsg101) of Rattus norvegicus (Rat).